A 161-amino-acid polypeptide reads, in one-letter code: Lipid droplet assembly factor 1 (161 aa).

Over 1-43 (MAKEEPQSISRDLQELQKKLSLLIDSFQNNSKVVAFMKSPVGQ) the chain is Cytoplasmic. A helical membrane pass occupies residues 44–61 (YLDSHPFLAFTLLVFIVM). The Lumenal segment spans residues 62–67 (SAVPVG). A helical transmembrane segment spans residues 68–87 (FFLLIVVLTTLAALLGVIIL). Topologically, residues 88-93 (EGLVIS) are cytoplasmic. The helical transmembrane segment at 94–110 (VGGFSLLCILCGLGFVS) threads the bilayer. At 111 to 116 (LAMSGM) the chain is on the lumenal side. A helical transmembrane segment spans residues 117–133 (MIASYVVVSSLISCWFS). Over 134–161 (PRPLTQQNTSCDFLPAMKSAEFEGLYQE) the chain is Cytoplasmic.

This sequence belongs to the LDAF1 family. As to quaternary structure, interacts with isoform 1 and isoform 3 of BSCL2/seipin to form an oligomeric complex. Expressed at high levels in the heart and skeletal muscle. Expressed at low levels in kidney, small intestine, lung and liver.

The protein localises to the endoplasmic reticulum membrane. It localises to the lipid droplet. Functionally, plays an important role in the formation of lipid droplets (LD) which are storage organelles at the center of lipid and energy homeostasis. In association with BSCL2/seipin, defines the sites of LD formation in the endoplasmic reticulum. The polypeptide is Lipid droplet assembly factor 1 (Homo sapiens (Human)).